We begin with the raw amino-acid sequence, 265 residues long: Eukaryotic translation initiation factor 3 subunit J (265 aa).

2 disordered regions span residues 1–113 (MPPS…DSDL) and 215–237 (SNEK…AAKT). Residues 27–45 (DEEDGDVLDSWDAADDSEV) show a composition bias toward acidic residues. Positions 43-95 (SEVEREKAAKAAEAKAKAEAEAAANKKSKAQRIAEHKTRRKAAEDEEDDESDE) form a coiled coil. The span at 46–62 (EREKAAKAAEAKAKAEA) shows a compositional bias: basic and acidic residues. Over residues 86 to 97 (EDEEDDESDEDE) the composition is skewed to acidic residues. Basic and acidic residues-rich tracts occupy residues 98–113 (AEKR…DSDL) and 217–229 (EKMK…DKGS).

The protein belongs to the eIF-3 subunit J family. As to quaternary structure, component of the eukaryotic translation initiation factor 3 (eIF-3) complex.

Its subcellular location is the cytoplasm. Its function is as follows. Component of the eukaryotic translation initiation factor 3 (eIF-3) complex, which is involved in protein synthesis of a specialized repertoire of mRNAs and, together with other initiation factors, stimulates binding of mRNA and methionyl-tRNAi to the 40S ribosome. The eIF-3 complex specifically targets and initiates translation of a subset of mRNAs involved in cell proliferation. This Emericella nidulans (strain FGSC A4 / ATCC 38163 / CBS 112.46 / NRRL 194 / M139) (Aspergillus nidulans) protein is Eukaryotic translation initiation factor 3 subunit J (hcr1).